A 392-amino-acid polypeptide reads, in one-letter code: Trans-2-enoyl-CoA reductase [NADH] (392 aa).

Residues 74 to 75 (FE), 111 to 112 (DA), and 141 to 142 (LA) contribute to the NAD(+) site. Tyr227 lines the substrate pocket. The Proton donor role is filled by Tyr237. NAD(+)-binding positions include Lys246 and 276-278 (VVT).

This sequence belongs to the TER reductase family. As to quaternary structure, monomer.

The catalysed reaction is a 2,3-saturated acyl-CoA + NAD(+) = a (2E)-enoyl-CoA + NADH + H(+). Its pathway is lipid metabolism; fatty acid biosynthesis. Functionally, involved in the fatty acid synthesis (FAS II). Catalyzes the reduction of a carbon-carbon double bond in an enoyl moiety that is covalently linked to a coenzyme A (CoA). This chain is Trans-2-enoyl-CoA reductase [NADH], found in Brachyspira hyodysenteriae (strain ATCC 49526 / WA1).